Reading from the N-terminus, the 109-residue chain is UPF0060 membrane protein PA3275 (109 aa).

4 consecutive transmembrane segments (helical) span residues 5–25 (FWFV…YLWL), 27–47 (LGKS…FALL), 59–79 (AYAA…AFVE), and 84–104 (LWSD…VLFG).

This sequence belongs to the UPF0060 family.

The protein resides in the cell inner membrane. This Pseudomonas aeruginosa (strain ATCC 15692 / DSM 22644 / CIP 104116 / JCM 14847 / LMG 12228 / 1C / PRS 101 / PAO1) protein is UPF0060 membrane protein PA3275.